A 701-amino-acid chain; its full sequence is Elongation factor G (701 aa).

The tr-type G domain occupies 8–291 (GRYRNIGIVA…AVIDYLPAPT (284 aa)). GTP is bound by residues 17–24 (AHVDAGKT), 89–93 (DTPGH), and 143–146 (NKMD).

It belongs to the TRAFAC class translation factor GTPase superfamily. Classic translation factor GTPase family. EF-G/EF-2 subfamily.

It localises to the cytoplasm. Functionally, catalyzes the GTP-dependent ribosomal translocation step during translation elongation. During this step, the ribosome changes from the pre-translocational (PRE) to the post-translocational (POST) state as the newly formed A-site-bound peptidyl-tRNA and P-site-bound deacylated tRNA move to the P and E sites, respectively. Catalyzes the coordinated movement of the two tRNA molecules, the mRNA and conformational changes in the ribosome. This is Elongation factor G from Pseudomonas savastanoi pv. phaseolicola (strain 1448A / Race 6) (Pseudomonas syringae pv. phaseolicola (strain 1448A / Race 6)).